Consider the following 202-residue polypeptide: PXMP2/4 family protein 1 (202 aa).

The next 4 membrane-spanning stretches (helical) occupy residues Pro-21–Gln-41, Leu-54–Phe-72, Lys-138–Val-154, and Leu-161–Val-177.

Belongs to the peroxisomal membrane protein PXMP2/4 family.

The protein resides in the membrane. In Dictyostelium discoideum (Social amoeba), this protein is PXMP2/4 family protein 1.